We begin with the raw amino-acid sequence, 234 residues long: Phosphoglycolate phosphatase (234 aa).

The active-site Nucleophile is the Asp9. The Mg(2+) site is built by Asp9 and Asp11. Lys162 is a substrate binding site. 2 residues coordinate Mg(2+): Asp185 and Asp189.

It belongs to the archaeal SPP-like hydrolase family. It depends on Mg(2+) as a cofactor.

It carries out the reaction 2-phosphoglycolate + H2O = glycolate + phosphate. Functionally, catalyzes the dephosphorylation of 2-phosphoglycolate. The polypeptide is Phosphoglycolate phosphatase (Methanobrevibacter smithii (strain ATCC 35061 / DSM 861 / OCM 144 / PS)).